The following is a 144-amino-acid chain: Galectin b (144 aa).

The Galectin domain maps to 1–138 (DHIDLEFDVG…DAVLRKLCVV (138 aa)).

Lectin that binds beta-galactoside and a wide array of complex carbohydrates. This chain is Galectin b, found in Aplysina lactuca (Marine sponge).